Here is a 338-residue protein sequence, read N- to C-terminus: 1-aminocyclopropane-1-carboxylate deaminase (338 aa).

The residue at position 51 (K51) is an N6-(pyridoxal phosphate)lysine. Catalysis depends on S78, which acts as the Nucleophile.

Belongs to the ACC deaminase/D-cysteine desulfhydrase family. As to quaternary structure, homotrimer. It depends on pyridoxal 5'-phosphate as a cofactor.

It carries out the reaction 1-aminocyclopropane-1-carboxylate + H2O = 2-oxobutanoate + NH4(+). Its function is as follows. Catalyzes a cyclopropane ring-opening reaction, the irreversible conversion of 1-aminocyclopropane-1-carboxylate (ACC) to ammonia and alpha-ketobutyrate. Allows growth on ACC as a nitrogen source. The protein is 1-aminocyclopropane-1-carboxylate deaminase of Burkholderia cenocepacia (strain HI2424).